An 887-amino-acid polypeptide reads, in one-letter code: Pyruvate dehydrogenase E1 component (887 aa).

Homodimer. Part of the PDH complex, consisting of multiple copies of pyruvate dehydrogenase (E1), dihydrolipoamide acetyltransferase (E2) and lipoamide dehydrogenase (E3). It depends on thiamine diphosphate as a cofactor.

It catalyses the reaction N(6)-[(R)-lipoyl]-L-lysyl-[protein] + pyruvate + H(+) = N(6)-[(R)-S(8)-acetyldihydrolipoyl]-L-lysyl-[protein] + CO2. Component of the pyruvate dehydrogenase (PDH) complex, that catalyzes the overall conversion of pyruvate to acetyl-CoA and CO(2). This is Pyruvate dehydrogenase E1 component (aceE) from Buchnera aphidicola subsp. Acyrthosiphon pisum (strain APS) (Acyrthosiphon pisum symbiotic bacterium).